A 440-amino-acid polypeptide reads, in one-letter code: Tripartite motif-containing protein 14 (440 aa).

The B box-type zinc-finger motif lies at 17–59; sequence AYGWRCPEHSERPAELFCRRCGRCVCALCPVLGAHRGHPVGLA. The Zn(2+) site is built by Cys22, His25, Cys45, and His51. Residues 247 to 440 enclose the B30.2/SPRY domain; it reads ALLKTSPSPE…EGPISIPRLP (194 aa).

Belongs to the TRIM/RBCC family. Interacts with MAVS. Interacts with WRNIP1 and PPP6C; these interactions positively regulate the RIG-I signaling pathway. Interacts with CGAS; this interaction stabilizes CGAS and promotes type I interferon production. Interacts with USP14; this interaction mediates the cleavage of 'Lys-48'-linked ubiquitination of CGAS. Interacts with TBK1. Interacts with SPI1. Interacts with KDM4D and USP14. Post-translationally, ubiquitinated. Undergoes 'Lys-63'-linked polyubiquitination; this modification allows IKBKG/NEMO recruitment to MAVS. Undergoes 'Lys-48'-linked polyubiquitination by RNF125; this modification mediates its degradation via the ubiquitin-proteasome pathway. As to expression, expressed with high level in spleen, thymus, liver and testis. Expressed with low level in the brain, kidney, and skeletal muscle. Expressed in various differentiation stages of B-lymphocytes.

The protein localises to the mitochondrion outer membrane. It is found in the cytoplasmic vesicle. Its subcellular location is the phagosome. Functionally, plays a role in the innate immune defense against viruses. Facilitates the type I IFN response by interacting with MAVS at the outer mitochondria membrane and thereby recruiting NF-kappa-B essential modulator IKBKG/NEMO to the MAVS signalosome, leading to the activation of both the IFN regulatory factor 3/IRF3 and NF-kappa-B pathways. Positively regulates the CGAS-induced type I interferon signaling pathway by stabilizing CGAS and inhibiting its autophagic degradation. Inhibits the transcriptional activity of SPI1 in a dose-dependent manner. Also inhibits OPTN-mediated selective autophagic degradation of KDM4D and thereby negatively regulates H3K9me2 and H3K9me3. Mechanistically, recruits USP14 to remove the 'Lys-63'-linked ubiquitination of KDM4D, preventing its recognition by OPTN and subsequent degradation. Its function is as follows. Plays an essential role in the innate immune defense against viruses and bacteria. Facilitates the type I IFN response by interacting with MAVS at the outer mitochondria membrane and thereby recruiting NF-kappa-B essential modulator IKBKG/NEMO to the MAVS signalosome, leading to the activation of both the IFN regulatory factor 3/IRF3 and NF-kappa-B pathways. Positively regulates the CGAS-induced type I interferon signaling pathway by stabilizing CGAS and inhibiting its autophagic degradation. Acts as a scaffold between TBK1 and STAT3 to promote phosphorylation of STAT3 and resolve interferon-stimulated gene (ISG) expression. Inhibits the transcriptional activity of SPI1 in a dose-dependent manner. In Mus musculus (Mouse), this protein is Tripartite motif-containing protein 14 (Trim14).